A 179-amino-acid chain; its full sequence is Inorganic pyrophosphatase (179 aa).

Residues K30, R44, and Y56 each contribute to the substrate site. Mg(2+) is bound by residues D66, D71, and D103. Y143 contributes to the substrate binding site.

Belongs to the PPase family. As to quaternary structure, homohexamer. Requires Mg(2+) as cofactor.

Its subcellular location is the cytoplasm. It carries out the reaction diphosphate + H2O = 2 phosphate + H(+). In terms of biological role, catalyzes the hydrolysis of inorganic pyrophosphate (PPi) forming two phosphate ions. The chain is Inorganic pyrophosphatase from Wigglesworthia glossinidia brevipalpis.